The sequence spans 209 residues: Small ribosomal subunit protein uS4 (209 aa).

An S4 RNA-binding domain is found at 98 to 164 (SRLDNVVYRG…TPFIVARETA (67 aa)).

Belongs to the universal ribosomal protein uS4 family. Part of the 30S ribosomal subunit. Contacts protein S5. The interaction surface between S4 and S5 is involved in control of translational fidelity.

One of the primary rRNA binding proteins, it binds directly to 16S rRNA where it nucleates assembly of the body of the 30S subunit. Its function is as follows. With S5 and S12 plays an important role in translational accuracy. The sequence is that of Small ribosomal subunit protein uS4 from Frankia alni (strain DSM 45986 / CECT 9034 / ACN14a).